We begin with the raw amino-acid sequence, 958 residues long: Translation initiation factor IF-2 (958 aa).

2 disordered regions span residues 67 to 95 and 111 to 355; these read APAA…APAP and PAPA…VPRG. The segment covering 75–95 has biased composition (pro residues); it reads APAPGPAAPKAPAPAPAAPAP. Residues 140 to 161 are compositionally biased toward low complexity; that stretch reads PAPARQGGQAPRPGGPRPGNNP. Residues 195–206 are compositionally biased toward basic and acidic residues; that stretch reads RGERRNDGERPG. Residues 209–221 are compositionally biased toward low complexity; sequence RPAAGAGGPRPAA. Residues 228–241 show a composition bias toward pro residues; sequence PGAPRPGAPRPGAP. Gly residues predominate over residues 268-325; that stretch reads GGAGRPGGAGRPGGGPGRPGGAPGAGTGGGAPAGGGFGKGGRGRGGTQGAFGKGGAGR. Over residues 326-335 the composition is skewed to basic residues; sequence GKQRKSKRAK. The region spanning 450-621 is the tr-type G domain; sequence ARAPVVTVMG…AVLLTADAAL (172 aa). The segment at 459 to 466 is G1; sequence GHVDHGKT. GTP is bound at residue 459 to 466; it reads GHVDHGKT. Positions 484 to 488 are G2; the sequence is GITQH. Residues 509 to 512 are G3; the sequence is DTPG. GTP is bound by residues 509–513 and 563–566; these read DTPGH and NKID. The segment at 563-566 is G4; it reads NKID. A G5 region spans residues 599 to 601; sequence SAR.

Belongs to the TRAFAC class translation factor GTPase superfamily. Classic translation factor GTPase family. IF-2 subfamily.

The protein localises to the cytoplasm. Its function is as follows. One of the essential components for the initiation of protein synthesis. Protects formylmethionyl-tRNA from spontaneous hydrolysis and promotes its binding to the 30S ribosomal subunits. Also involved in the hydrolysis of GTP during the formation of the 70S ribosomal complex. The protein is Translation initiation factor IF-2 of Paenarthrobacter aurescens (strain TC1).